Consider the following 406-residue polypeptide: Probable endo-xylogalacturonan hydrolase A (406 aa).

An N-terminal signal peptide occupies residues 1 to 18; sequence MLYPRNLALFSLLSLSSA. 4 PbH1 repeats span residues 183 to 213, 214 to 235, 237 to 257, and 299 to 320; these read TQHV…DIGA, STHV…AFKP, SNYV…SVGS, and VKNV…QIES. Aspartate 228 (proton donor) is an active-site residue. Residue histidine 251 is part of the active site. Residue asparagine 301 is glycosylated (N-linked (GlcNAc...) asparagine).

This sequence belongs to the glycosyl hydrolase 28 family.

The protein resides in the secreted. Its function is as follows. Pectinolytic enzyme involved in the degradation of xylogalacturonan (xga), a galacturonan backbone heavily substituted with xylose, and which is one important component of the hairy regions of pectin. Activity requires a galacturonic acid backbone substituted with xylose. This Aspergillus fumigatus (strain ATCC MYA-4609 / CBS 101355 / FGSC A1100 / Af293) (Neosartorya fumigata) protein is Probable endo-xylogalacturonan hydrolase A (xghA).